Consider the following 157-residue polypeptide: Stalk-specific protein B (157 aa).

Positions 1 to 19 (MRSILILLSLLLTIAFASA) are cleaved as a signal peptide.

The protein localises to the secreted. This Dictyostelium discoideum (Social amoeba) protein is Stalk-specific protein B (staB).